A 295-amino-acid chain; its full sequence is MPRGPASLLLLVLASHCCLGSARGLFLFGQPDFSYKRSNCKPIPANLQLCHGIEYQNMRLPNLLGHETMKEVLEQAGAWIPLVMKQCHPDTKKFLCSLFAPVCLDDLDETIQPCHSLCVQVKDRCAPVMSAFGFPWPDMLECDRFPQDNDLCIPLASSDHLLPATEEAPKVCEACKTKNEDDNDIMETLCKNDFALKIKVKEITYINRDTKIILETKSKTIYKLNGVSERDLKKSVLWLKDSLQCTCEEMNDINAPYLVMGQKQGGELVITSVKRWQKGQREFKRISRSIRKLQC.

A signal peptide spans 1–24 (MPRGPASLLLLVLASHCCLGSARG). The FZ domain maps to 35 to 155 (YKRSNCKPIP…PQDNDLCIPL (121 aa)). Disulfide bonds link C40-C103, C50-C96, C87-C125, C114-C152, C118-C142, C172-C245, C175-C247, and C190-C295. Positions 172–295 (CEACKTKNED…ISRSIRKLQC (124 aa)) constitute an NTR domain.

This sequence belongs to the secreted frizzled-related protein (sFRP) family. As to expression, highly expressed in the eye. Weaker expression in heart and lung.

The protein localises to the secreted. Its function is as follows. Soluble frizzled-related proteins (sFRPS) function as modulators of Wnt signaling through direct interaction with Wnts. They have a role in regulating cell growth and differentiation in specific cell types. SFRP2 may be important for eye retinal development and for myogenesis. The sequence is that of Secreted frizzled-related protein 2 from Mus musculus (Mouse).